We begin with the raw amino-acid sequence, 27 residues long: uncharacterized protein (27 aa).

The protein localises to the plastid. The protein resides in the chloroplast. This is an uncharacterized protein from Anthoceros angustus (Hornwort).